The chain runs to 574 residues: Man(5)GlcNAc(2)-PP-dolichol translocation protein RFT1 (574 aa).

At 1 to 24 (MAKKNSQLPSTSEQILERSTTGAT) the chain is on the lumenal side. The helical transmembrane segment at 25 to 45 (FLMMGQLFTKLVTFILNNLLI) threads the bilayer. Topologically, residues 46–48 (RFL) are cytoplasmic. The helical transmembrane segment at 49–69 (SPRIFGITAFLEFIQGTVLFF) threads the bilayer. At 70-110 (SRDAIRLSTLRISDSGNGIIDDDDEEEYQETHYKSKVLQTA) the chain is on the lumenal side. Residues 111–131 (VNFAYIPFWIGFPLSIGLIAW) form a helical membrane-spanning segment. At 132 to 148 (QYRNINAYFITLPFFRW) the chain is on the cytoplasmic side. Residues 149-169 (SIFLIWLSIIVELLSEPFFIV) traverse the membrane as a helical segment. Topologically, residues 170–181 (NQFMLNYAARSR) are lumenal. The chain crosses the membrane as a helical span at residues 182–202 (FESIAVTTGCIVNFIVVYAVQ). Topologically, residues 203-218 (QSRYPMGVVTSDIDKE) are cytoplasmic. The helical transmembrane segment at 219–239 (GIAILAFALGKLAHSITLLAC) threads the bilayer. Residues 240–319 (YYWDYLKNFK…INSLCTVEEQ (80 aa)) are Lumenal-facing. A helical transmembrane segment spans residues 320–340 (GIYALLSNYGSLLTRLLFAPI). The Cytoplasmic segment spans residues 341-372 (EESLRLFLARLLSSHNPKNLKLSIEVLVNLTR). A helical membrane pass occupies residues 373-393 (FYIYLSLMIIVFGPANSSFLL). The Lumenal segment spans residues 394–413 (QFLIGSKWSTTSVLDTIRVY). Residues 414–434 (CFYIPFLSLNGIFEAFFQSVA) traverse the membrane as a helical segment. Residues 435-443 (TGDQILKHS) lie on the Cytoplasmic side of the membrane. Residues 444–464 (YFMMAFSGIFLLNSWLLIEKL) traverse the membrane as a helical segment. Residues 465–469 (KLSIE) lie on the Lumenal side of the membrane. A helical transmembrane segment spans residues 470–490 (GLILSNIINMVLRILYCGVFL). The Cytoplasmic portion of the chain corresponds to 491-509 (NKFHRELFTDSSFFFNFKD). The helical transmembrane segment at 510–530 (FKTVIIAGSTICLLDWWFIGY) threads the bilayer. At 531–532 (VK) the chain is on the lumenal side. The helical transmembrane segment at 533-553 (NLQQFVVNVLFAMGLLALILV) threads the bilayer. Residues 554 to 574 (KERQTIQSFINKRAVSNSKDV) are Cytoplasmic-facing.

The protein belongs to the RFT1 family.

Its subcellular location is the endoplasmic reticulum membrane. It participates in protein modification; protein glycosylation. In terms of biological role, intramembrane glycolipid transporter that operates in the biosynthetic pathway of dolichol-linked oligosaccharides, the glycan precursors employed in protein asparagine (N)-glycosylation. The sequential addition of sugars to dolichol pyrophosphate produces dolichol-linked oligosaccharides containing fourteen sugars, including two GlcNAcs, nine mannoses and three glucoses. Once assembled, the oligosaccharide is transferred from the lipid to nascent proteins by oligosaccharyltransferases. The assembly of dolichol-linked oligosaccharides begins on the cytosolic side of the endoplasmic reticulum membrane and finishes in its lumen. RFT1 could mediate the translocation of the cytosolically oriented intermediate DolPP-GlcNAc2Man5, produced by ALG11, into the ER lumen where dolichol-linked oligosaccharides assembly continues. However, the intramembrane lipid transporter activity could not be confirmed in vitro. The chain is Man(5)GlcNAc(2)-PP-dolichol translocation protein RFT1 from Saccharomyces cerevisiae (strain ATCC 204508 / S288c) (Baker's yeast).